The sequence spans 80 residues: MLPLAKNALSRLQVRSIQQVVARQSHQKRAPSFHDKYGNAILAGGAIFCVSTWTYTATQIGIEWNMSPVGRVTPKEWRDQ.

Residues 1 to 24 (MLPLAKNALSRLQVRSIQQVVARQ) constitute a mitochondrion transit peptide. Topologically, residues 25 to 39 (SHQKRAPSFHDKYGN) are mitochondrial matrix. A helical membrane pass occupies residues 40–60 (AILAGGAIFCVSTWTYTATQI). Residues 61–80 (GIEWNMSPVGRVTPKEWRDQ) lie on the Mitochondrial intermembrane side of the membrane.

The protein belongs to the cytochrome c oxidase VIIb family. As to quaternary structure, component of the cytochrome c oxidase (complex IV, CIV), a multisubunit enzyme composed of 14 subunits. The complex is composed of a catalytic core of 3 subunits MT-CO1, MT-CO2 and MT-CO3, encoded in the mitochondrial DNA, and 11 supernumerary subunits COX4I, COX5A, COX5B, COX6A, COX6B, COX6C, COX7A, COX7B, COX7C, COX8 and NDUFA4, which are encoded in the nuclear genome. The complex exists as a monomer or a dimer and forms supercomplexes (SCs) in the inner mitochondrial membrane with NADH-ubiquinone oxidoreductase (complex I, CI) and ubiquinol-cytochrome c oxidoreductase (cytochrome b-c1 complex, complex III, CIII), resulting in different assemblies (supercomplex SCI(1)III(2)IV(1) and megacomplex MCI(2)III(2)IV(2)).

It is found in the mitochondrion inner membrane. It functions in the pathway energy metabolism; oxidative phosphorylation. Functionally, component of the cytochrome c oxidase, the last enzyme in the mitochondrial electron transport chain which drives oxidative phosphorylation. The respiratory chain contains 3 multisubunit complexes succinate dehydrogenase (complex II, CII), ubiquinol-cytochrome c oxidoreductase (cytochrome b-c1 complex, complex III, CIII) and cytochrome c oxidase (complex IV, CIV), that cooperate to transfer electrons derived from NADH and succinate to molecular oxygen, creating an electrochemical gradient over the inner membrane that drives transmembrane transport and the ATP synthase. Cytochrome c oxidase is the component of the respiratory chain that catalyzes the reduction of oxygen to water. Electrons originating from reduced cytochrome c in the intermembrane space (IMS) are transferred via the dinuclear copper A center (CU(A)) of subunit 2 and heme A of subunit 1 to the active site in subunit 1, a binuclear center (BNC) formed by heme A3 and copper B (CU(B)). The BNC reduces molecular oxygen to 2 water molecules using 4 electrons from cytochrome c in the IMS and 4 protons from the mitochondrial matrix. Plays a role in proper central nervous system (CNS) development in vertebrates. The polypeptide is Cytochrome c oxidase subunit 7B, mitochondrial (Cox7b) (Mus musculus (Mouse)).